Here is a 297-residue protein sequence, read N- to C-terminus: 33 kDa chaperonin (297 aa).

2 cysteine pairs are disulfide-bonded: C232–C234 and C266–C269.

The protein belongs to the HSP33 family. Under oxidizing conditions two disulfide bonds are formed involving the reactive cysteines. Under reducing conditions zinc is bound to the reactive cysteines and the protein is inactive.

It is found in the cytoplasm. Its function is as follows. Redox regulated molecular chaperone. Protects both thermally unfolding and oxidatively damaged proteins from irreversible aggregation. Plays an important role in the bacterial defense system toward oxidative stress. The protein is 33 kDa chaperonin of Pseudomonas paraeruginosa (strain DSM 24068 / PA7) (Pseudomonas aeruginosa (strain PA7)).